The sequence spans 166 residues: SsrA-binding protein (166 aa).

A disordered region spans residues 143–166 (HDKREDDKRKQANRDMKSALARYR). The span at 144–159 (DKREDDKRKQANRDMK) shows a compositional bias: basic and acidic residues.

It belongs to the SmpB family.

The protein localises to the cytoplasm. Functionally, required for rescue of stalled ribosomes mediated by trans-translation. Binds to transfer-messenger RNA (tmRNA), required for stable association of tmRNA with ribosomes. tmRNA and SmpB together mimic tRNA shape, replacing the anticodon stem-loop with SmpB. tmRNA is encoded by the ssrA gene; the 2 termini fold to resemble tRNA(Ala) and it encodes a 'tag peptide', a short internal open reading frame. During trans-translation Ala-aminoacylated tmRNA acts like a tRNA, entering the A-site of stalled ribosomes, displacing the stalled mRNA. The ribosome then switches to translate the ORF on the tmRNA; the nascent peptide is terminated with the 'tag peptide' encoded by the tmRNA and targeted for degradation. The ribosome is freed to recommence translation, which seems to be the essential function of trans-translation. In Prochlorococcus marinus (strain MIT 9211), this protein is SsrA-binding protein.